Consider the following 177-residue polypeptide: Interleukin-25 (177 aa).

A signal peptide spans M1 to T32. Residues P58 to P81 are disordered. The span at R69 to E78 shows a compositional bias: basic and acidic residues. 2 disulfide bridges follow: C110-C168 and C115-C170. N136 is a glycosylation site (N-linked (GlcNAc...) asparagine).

This sequence belongs to the IL-17 family. As to expression, expressed at low levels in several tissues, including brain, kidney, lung, prostate, testis, spinal cord, adrenal gland, and trachea.

Its subcellular location is the secreted. In terms of biological role, cytokine produced by various cells such as eosinophils, T-helper type 2 (Th2) cells or epithelial cells that plays a role in internal safety of adaptive immune responses by regulating cytokine production. Promotes and augments T-helper type 2 responses locally or systemically. Exerts its activity via its receptor composed of IL17RA and IL17RB for signal transduction. In turn, stimulates the JAK2-STAT5A pathway and promotes the secretion of type-2 associated cytokines including IL4, IL9 and IL13. Also induces the release of IL8, and IL6 from eosinophils through the combined activation of MAPK and NF-kappa-B pathways. Inhibits the differentiation of T-helper (Th17) cells via the production of IL4, IL5 and IL13. The protein is Interleukin-25 (IL25) of Homo sapiens (Human).